We begin with the raw amino-acid sequence, 847 residues long: Putative disease resistance RPP13-like protein 2 (847 aa).

A coiled-coil region spans residues 26–42 (GVKDDLEELKTELTCIQ). Positions 142–446 (STSRVREVRR…AEGFIQEDEE (305 aa)) constitute an NB-ARC domain. Position 191–198 (191–198 (GMEGLGKT)) interacts with ATP. LRR repeat units lie at residues 587-610 (LVHL…ISNL), 612-634 (FLQT…NLTS), 703-726 (LKNL…TVRF), 749-774 (FPSL…KLQR), and 807-830 (IKRL…NLDN).

The protein belongs to the disease resistance NB-LRR family. RPP13 subfamily.

Its function is as follows. Potential disease resistance protein. This Arabidopsis thaliana (Mouse-ear cress) protein is Putative disease resistance RPP13-like protein 2 (RPP13L2).